The following is a 1083-amino-acid chain: Ubiquitin-protein ligase E3C (1083 aa).

Basic and acidic residues-rich tracts occupy residues 1–10 (MFSFEGDFKT) and 20–40 (SRKE…RKRE). Residues 1-40 (MFSFEGDFKTRPKVSLGGASRKEEKASLLHRTQEERRKRE) are disordered. Residues 1–60 (MFSFEGDFKTRPKVSLGGASRKEEKASLLHRTQEERRKREEERRRLKNAIIIQSFIRGYR) are cis-determinant of acceptor ubiquitin-binding. Positions 45-74 (RLKNAIIIQSFIRGYRDRKQQYSIQRSAFD) constitute an IQ domain. The disordered stretch occupies residues 355-385 (SPASASCHDSASDSEEESEEADKPSSPEDGR). The span at 375 to 385 (ADKPSSPEDGR) shows a compositional bias: basic and acidic residues. One can recognise an HECT domain in the interval 744–1083 (NEPDLKKRIR…IECAAGFELS (340 aa)). Lys-903 is covalently cross-linked (Glycyl lysine isopeptide (Lys-Gly) (interchain with G-Cter in ubiquitin); by autocatalysis). Cys-1051 acts as the Glycyl thioester intermediate in catalysis.

It belongs to the UBE3C family. As to quaternary structure, interacts with 26S proteasomes. Interacts (via the HECT domain) with UBE2D1 and, less efficiently, with UBE2L3. Autoubiquitinated; promoting its own degradation. As to expression, highly expressed in skeletal muscle. Detected at much lower levels in kidney and pancreas.

It catalyses the reaction S-ubiquitinyl-[E2 ubiquitin-conjugating enzyme]-L-cysteine + [acceptor protein]-L-lysine = [E2 ubiquitin-conjugating enzyme]-L-cysteine + N(6)-ubiquitinyl-[acceptor protein]-L-lysine.. Its pathway is protein modification; protein ubiquitination. Functionally, E3 ubiquitin-protein ligase that specifically catalyzes 'Lys-29'- and 'Lys-48'-linked polyubiquitin chains. Accepts ubiquitin from the E2 ubiquitin-conjugating enzyme UBE2D1 in the form of a thioester and then directly transfers the ubiquitin to targeted substrates. Associates with the proteasome and promotes elongation of ubiquitin chains on substrates bound to the 26S proteasome. Also catalyzes 'Lys-29'- and 'Lys-48'-linked ubiquitination of 26S proteasome subunit ADRM1/RPN13 in response to proteotoxic stress, impairing the ability of the proteasome to bind and degrade ubiquitin-conjugated proteins. Acts as a negative regulator of autophagy by mediating 'Lys-29'- and 'Lys-48'-linked ubiquitination of PIK3C3/VPS34, promoting its degradation. Can assemble unanchored poly-ubiquitin chains in either 'Lys-29'- or 'Lys-48'-linked polyubiquitin chains; with some preference for 'Lys-48' linkages. Acts as a negative regulator of type I interferon by mediating 'Lys-48'-linked ubiquitination of IRF3 and IRF7, leading to their degradation by the proteasome. Catalyzes ubiquitination and degradation of CAND2. The polypeptide is Ubiquitin-protein ligase E3C (Homo sapiens (Human)).